A 295-amino-acid chain; its full sequence is Cop9 signalosome-interactor 1 (295 aa).

Component of a COP9 signalosome-like (CSN) complex, composed of RRI1/CSN5, CSN9, RRI2/CSN10, PCI8/CSN11, CSN12 and CSI1. In the complex, it probably interacts directly with CSN9 and CSN12. Interacts also with RPN5.

The protein localises to the cytoplasm. It localises to the nucleus. Functionally, component of the COP9 signalosome (CSN) complex that acts as an regulator of the ubiquitin (Ubl) conjugation pathway by mediating the deneddylation of the cullin subunit of SCF-type E3 ubiquitin-protein ligase complexes The CSN complex is involved in the regulation of the mating pheromone response. The sequence is that of Cop9 signalosome-interactor 1 (CSI1) from Saccharomyces cerevisiae (strain ATCC 204508 / S288c) (Baker's yeast).